A 299-amino-acid chain; its full sequence is Very long chain fatty acid elongase 5 (299 aa).

At methionine 1 the chain carries N-acetylmethionine. 7 helical membrane-spanning segments follow: residues 26-46, 64-84, 112-132, 150-170, 172-192, 205-225, and 226-246; these read WFLLDNYIPTFICSVIYLLIV, ILVVYNLGLTLLSLYMFCELV, VLWWYYFSKLIEFMDTFFFIL, MLNIWWFVMNWVPCGHSYFGA, LNSFIHVLMYSYYGLSSVLSM, GQLLQSVLTIIQTSCGVIWPC, and TFPLGWLYFQIGYMISLIALF. The disordered stretch occupies residues 262–299; sequence RKDHLKDHQNGSKAAVNGHTNSFSPLENNVKPRKLRKD. Residues 279-288 show a composition bias toward polar residues; sequence GHTNSFSPLE. Serine 285 is subject to Phosphoserine.

The protein belongs to the ELO family. ELOVL5 subfamily. As to quaternary structure, interacts with TECR.

Its subcellular location is the endoplasmic reticulum membrane. The protein resides in the cell projection. It is found in the dendrite. The catalysed reaction is a very-long-chain acyl-CoA + malonyl-CoA + H(+) = a very-long-chain 3-oxoacyl-CoA + CO2 + CoA. It carries out the reaction (6Z,9Z,12Z)-octadecatrienoyl-CoA + malonyl-CoA + H(+) = (8Z,11Z,14Z)-3-oxoeicosatrienoyl-CoA + CO2 + CoA. The enzyme catalyses (9Z,12Z,15Z)-octadecatrienoyl-CoA + malonyl-CoA + H(+) = (11Z,14Z,17Z)-3-oxoeicosatrienoyl-CoA + CO2 + CoA. It catalyses the reaction (9Z)-hexadecenoyl-CoA + malonyl-CoA + H(+) = 3-oxo-(11Z)-octadecenoyl-CoA + CO2 + CoA. The catalysed reaction is (9Z)-octadecenoyl-CoA + malonyl-CoA + H(+) = 3-oxo-(11Z)-eicosenoyl-CoA + CO2 + CoA. It carries out the reaction (11Z)-octadecenoyl-CoA + malonyl-CoA + H(+) = 3-oxo-(13Z)-eicosenoyl-CoA + CO2 + CoA. The enzyme catalyses (9Z,12Z)-octadecadienoyl-CoA + malonyl-CoA + H(+) = (11Z,14Z)-3-oxoicosa-11,14-dienoyl-CoA + CO2 + CoA. It catalyses the reaction (6Z,9Z,12Z,15Z)-octadecatetraenoyl-CoA + malonyl-CoA + H(+) = (8Z,11Z,14Z,17Z)-3-oxoicosatetraenoyl-CoA + CO2 + CoA. The catalysed reaction is (5Z,8Z,11Z,14Z)-eicosatetraenoyl-CoA + malonyl-CoA + H(+) = (7Z,10Z,13Z,16Z)-3-oxodocosatetraenoyl-CoA + CO2 + CoA. It carries out the reaction (5Z,8Z,11Z,14Z,17Z)-eicosapentaenoyl-CoA + malonyl-CoA + H(+) = 3-oxo-(7Z,10Z,13Z,16Z,19Z)-docosapentaenoyl-CoA + CO2 + CoA. Its pathway is lipid metabolism; polyunsaturated fatty acid biosynthesis. Catalyzes the first and rate-limiting reaction of the four reactions that constitute the long-chain fatty acids elongation cycle. This endoplasmic reticulum-bound enzymatic process allows the addition of 2 carbons to the chain of long- and very long-chain fatty acids (VLCFAs) per cycle. Condensing enzyme that acts specifically toward polyunsaturated acyl-CoA with the higher activity toward C18:3(n-6) acyl-CoA. May participate in the production of monounsaturated and of polyunsaturated VLCFAs of different chain lengths that are involved in multiple biological processes as precursors of membrane lipids and lipid mediators. In conditions where the essential linoleic and alpha linoleic fatty acids are lacking it is also involved in the synthesis of Mead acid from oleic acid. The polypeptide is Very long chain fatty acid elongase 5 (Pongo abelii (Sumatran orangutan)).